Reading from the N-terminus, the 245-residue chain is 14-3-3 protein theta (245 aa).

This sequence belongs to the 14-3-3 family. In terms of assembly, homodimer, and heterodimer with other family members.

It localises to the cytoplasm. Adapter protein implicated in the regulation of a large spectrum of both general and specialized signaling pathways. Binds to a large number of partners, usually by recognition of a phosphoserine or phosphothreonine motif. Binding generally results in the modulation of the activity of the binding partner. This Gallus gallus (Chicken) protein is 14-3-3 protein theta (YWHAQ).